Consider the following 196-residue polypeptide: Thymidine kinase (196 aa).

Position 17–24 (17–24 (GPMFAGKT)) interacts with ATP. E92 (proton acceptor) is an active-site residue. Position 121 (F121) interacts with substrate. Residues C146 and C149 each coordinate Zn(2+). 166 to 170 (LILAG) is a substrate binding site. 2 residues coordinate Zn(2+): C179 and C182.

This sequence belongs to the thymidine kinase family.

The catalysed reaction is thymidine + ATP = dTMP + ADP + H(+). Its function is as follows. Phosphorylates thymidine. ASFV replicates in the cytoplasm of infected cells and contains genes encoding a number of enzymes needed for DNA synthesis, including thymidine kinase. Important for growth in swine macrophages in vitro and is a virus virulence factor in swine. The protein is Thymidine kinase of Ornithodoros (relapsing fever ticks).